A 274-amino-acid chain; its full sequence is 2,3,4,5-tetrahydropyridine-2,6-dicarboxylate N-succinyltransferase (274 aa).

It belongs to the transferase hexapeptide repeat family.

It localises to the cytoplasm. The enzyme catalyses (S)-2,3,4,5-tetrahydrodipicolinate + succinyl-CoA + H2O = (S)-2-succinylamino-6-oxoheptanedioate + CoA. The protein operates within amino-acid biosynthesis; L-lysine biosynthesis via DAP pathway; LL-2,6-diaminopimelate from (S)-tetrahydrodipicolinate (succinylase route): step 1/3. The chain is 2,3,4,5-tetrahydropyridine-2,6-dicarboxylate N-succinyltransferase from Salmonella heidelberg (strain SL476).